A 165-amino-acid polypeptide reads, in one-letter code: Large ribosomal subunit protein uL10 (165 aa).

It belongs to the universal ribosomal protein uL10 family. In terms of assembly, part of the ribosomal stalk of the 50S ribosomal subunit. The N-terminus interacts with L11 and the large rRNA to form the base of the stalk. The C-terminus forms an elongated spine to which L12 dimers bind in a sequential fashion forming a multimeric L10(L12)X complex.

Functionally, forms part of the ribosomal stalk, playing a central role in the interaction of the ribosome with GTP-bound translation factors. The sequence is that of Large ribosomal subunit protein uL10 from Cronobacter sakazakii (strain ATCC BAA-894) (Enterobacter sakazakii).